The primary structure comprises 165 residues: Inorganic pyrophosphatase (165 aa).

Positions 21, 35, and 47 each coordinate substrate. Mg(2+) contacts are provided by Asp-57, Asp-62, and Asp-94. Substrate is bound at residue Tyr-131.

Belongs to the PPase family. As to quaternary structure, homotrimer. In presence of divalent cations the trimers aggregate to form a hexamer. Mg(2+) is required as a cofactor.

The protein localises to the cytoplasm. The enzyme catalyses diphosphate + H2O = 2 phosphate + H(+). Functionally, catalyzes the hydrolysis of inorganic pyrophosphate (PPi) forming two phosphate ions. The sequence is that of Inorganic pyrophosphatase from Bacillus sp. (strain PS3).